Reading from the N-terminus, the 294-residue chain is MSETMTNQNVVNEEQPFNESKHRSHGIDISAIERSMEDLSIDNETIALEVNKLKLFYGEKEALHGIDLSIPQKRVTAFIGPSGCGKSTLLRCFNRMNDLVDGCRIDGQILLEQEDIYRKGVDVAELRRRVGMVFQKPNPFPKTIYENVAYGLRIQGINKKRILDETVEWALKSAALWDEVKDRLNDSALGLSGGQQQRLVIARTVAVKPEVLLLDEPASALDPLSTLKIEELIHELKNDYTIVIVTHNMQQAARVSDYTAFMYMGDLIEFGSTNQLFTNPSCKQTEDYITGRYG.

Positions 1–18 (MSETMTNQNVVNEEQPFN) are enriched in polar residues. Residues 1–24 (MSETMTNQNVVNEEQPFNESKHRS) form a disordered region. Residues 48–289 (LEVNKLKLFY…PSCKQTEDYI (242 aa)) enclose the ABC transporter domain. ATP is bound at residue 80-87 (GPSGCGKS).

Belongs to the ABC transporter superfamily. Phosphate importer (TC 3.A.1.7) family. As to quaternary structure, the complex is composed of two ATP-binding proteins (PstB), two transmembrane proteins (PstC and PstA) and a solute-binding protein (PstS).

It localises to the cell inner membrane. The enzyme catalyses phosphate(out) + ATP + H2O = ADP + 2 phosphate(in) + H(+). Part of the ABC transporter complex PstSACB involved in phosphate import. Responsible for energy coupling to the transport system. This Hahella chejuensis (strain KCTC 2396) protein is Phosphate import ATP-binding protein PstB.